Reading from the N-terminus, the 288-residue chain is SUR7 family protein pun1 (288 aa).

At 1–11 (MGMGFNPIKAL) the chain is on the cytoplasmic side. The helical transmembrane segment at 12–32 (FTGIGTVCVGVGALLSILCII) threads the bilayer. Residues N33, N50, N59, N66, N122, N153, and N160 are each glycosylated (N-linked (GlcNAc...) asparagine). Residues 33–185 (NQTQHNIAFQ…GACYAMRAMY (153 aa)) are Extracellular-facing. Residues 186-206 (ILGFIFFALTIVSIVISCLPF) form a helical membrane-spanning segment. The Cytoplasmic portion of the chain corresponds to 207–210 (FGPL). The chain crosses the membrane as a helical span at residues 211-231 (FLNVFSFFATIFTFIAAVIAV). The Extracellular segment spans residues 232-257 (ATYRIAISELEKNIEILNIPIVLGKK). Residues 258–278 (IYAYSFLSAAAGLAACILYFI) form a helical membrane-spanning segment. Residues 279–288 (GNLTSGYSPL) are Cytoplasmic-facing.

This sequence belongs to the SUR7 family.

The protein localises to the golgi apparatus membrane. It localises to the cell membrane. Its subcellular location is the cell tip. In terms of biological role, contributes to the wild-type cellular response to nitrogen stress through signaling pathways that regulate the expression of genes involved in amino acid biosynthesis. Required for wild-type filamentous growth, cell growth, and cell-cell adhesion. The polypeptide is SUR7 family protein pun1 (pun1) (Schizosaccharomyces pombe (strain 972 / ATCC 24843) (Fission yeast)).